Consider the following 779-residue polypeptide: Probable phosphoketolase 2 (779 aa).

Belongs to the XFP family. The cofactor is thiamine diphosphate.

In Rhizobium meliloti (strain 1021) (Ensifer meliloti), this protein is Probable phosphoketolase 2.